The chain runs to 389 residues: Putative teichuronic acid biosynthesis glycosyltransferase TuaC (389 aa).

The protein belongs to the glycosyltransferase group 1 family. Glycosyltransferase 4 subfamily.

It functions in the pathway cell wall biogenesis; teichuronic acid biosynthesis. The protein is Putative teichuronic acid biosynthesis glycosyltransferase TuaC (tuaC) of Bacillus subtilis (strain 168).